The sequence spans 216 residues: Protein-L-isoaspartate O-methyltransferase (216 aa).

Ser64 is an active-site residue.

Belongs to the methyltransferase superfamily. L-isoaspartyl/D-aspartyl protein methyltransferase family.

The protein localises to the cytoplasm. It carries out the reaction [protein]-L-isoaspartate + S-adenosyl-L-methionine = [protein]-L-isoaspartate alpha-methyl ester + S-adenosyl-L-homocysteine. Its function is as follows. Catalyzes the methyl esterification of L-isoaspartyl residues in peptides and proteins that result from spontaneous decomposition of normal L-aspartyl and L-asparaginyl residues. It plays a role in the repair and/or degradation of damaged proteins. In Paracoccus denitrificans (strain Pd 1222), this protein is Protein-L-isoaspartate O-methyltransferase.